The sequence spans 240 residues: DNA repair protein RecO (240 aa).

Belongs to the RecO family.

Involved in DNA repair and RecF pathway recombination. The protein is DNA repair protein RecO of Xanthomonas euvesicatoria pv. vesicatoria (strain 85-10) (Xanthomonas campestris pv. vesicatoria).